A 494-amino-acid polypeptide reads, in one-letter code: Aspartyl/glutamyl-tRNA(Asn/Gln) amidotransferase subunit B (494 aa).

It belongs to the GatB/GatE family. GatB subfamily. In terms of assembly, heterotrimer of A, B and C subunits.

It carries out the reaction L-glutamyl-tRNA(Gln) + L-glutamine + ATP + H2O = L-glutaminyl-tRNA(Gln) + L-glutamate + ADP + phosphate + H(+). It catalyses the reaction L-aspartyl-tRNA(Asn) + L-glutamine + ATP + H2O = L-asparaginyl-tRNA(Asn) + L-glutamate + ADP + phosphate + 2 H(+). Functionally, allows the formation of correctly charged Asn-tRNA(Asn) or Gln-tRNA(Gln) through the transamidation of misacylated Asp-tRNA(Asn) or Glu-tRNA(Gln) in organisms which lack either or both of asparaginyl-tRNA or glutaminyl-tRNA synthetases. The reaction takes place in the presence of glutamine and ATP through an activated phospho-Asp-tRNA(Asn) or phospho-Glu-tRNA(Gln). The polypeptide is Aspartyl/glutamyl-tRNA(Asn/Gln) amidotransferase subunit B (Synechococcus sp. (strain WH7803)).